Reading from the N-terminus, the 624-residue chain is Laccase-1 (624 aa).

A signal peptide spans 1 to 20 (MRGLAKLFFLSCSFVSLVSS). Plastocyanin-like domains are found at residues 72 to 183 (FASP…HSPN) and 195 to 343 (DRIV…CMFG). Cu cation contacts are provided by H117 and H119. C138 and C578 form a disulfide bridge. N-linked (GlcNAc...) asparagine glycosylation occurs at N149. Cu cation contacts are provided by H162 and H164. Residues N242 and N430 are each glycosylated (N-linked (GlcNAc...) asparagine). Positions 469 to 562 (IIINNLDTVI…GKLAVIVVQP (94 aa)) constitute a Plastocyanin-like 3 domain. The Cu cation site is built by H480, H483, and H485. A glycan (N-linked (GlcNAc...) asparagine) is linked at N503. H543, C544, H545, and H549 together coordinate Cu cation. Residues 579–604 (ANTDPNAFGPAKRSSSPSIQSSKTSS) form a disordered region. Positions 592–604 (SSSPSIQSSKTSS) are enriched in low complexity.

Belongs to the multicopper oxidase family. The cofactor is Cu cation.

The protein localises to the secreted. It is found in the cell wall. It catalyses the reaction 4 hydroquinone + O2 = 4 benzosemiquinone + 2 H2O. In terms of biological role, laccase that catalyzes the oxidation of certain aromatic compounds, including L-dopa, to quinones, which then polymerize to melanin. Able to oxidize a wide variety of aromatic diphenol and diamino groups in the ortho, meta, and para positions but not monophenolic groups such as in phenol, tyramine, or tyrosine. Plays an important role in virulence. Plays a role in dissemination to extrapulmonary sites but is not involved in pulmonary growth or in elicitation of cellular immune responses in the lung. This Cryptococcus neoformans var. neoformans serotype D (strain B-3501A) (Filobasidiella neoformans) protein is Laccase-1.